The sequence spans 305 residues: UDP-3-O-acyl-N-acetylglucosamine deacetylase (305 aa).

Residues histidine 79, histidine 238, and aspartate 242 each contribute to the Zn(2+) site. The Proton donor role is filled by histidine 265.

Belongs to the LpxC family. The cofactor is Zn(2+).

The enzyme catalyses a UDP-3-O-[(3R)-3-hydroxyacyl]-N-acetyl-alpha-D-glucosamine + H2O = a UDP-3-O-[(3R)-3-hydroxyacyl]-alpha-D-glucosamine + acetate. It participates in glycolipid biosynthesis; lipid IV(A) biosynthesis; lipid IV(A) from (3R)-3-hydroxytetradecanoyl-[acyl-carrier-protein] and UDP-N-acetyl-alpha-D-glucosamine: step 2/6. In terms of biological role, catalyzes the hydrolysis of UDP-3-O-myristoyl-N-acetylglucosamine to form UDP-3-O-myristoylglucosamine and acetate, the committed step in lipid A biosynthesis. The sequence is that of UDP-3-O-acyl-N-acetylglucosamine deacetylase from Escherichia fergusonii (strain ATCC 35469 / DSM 13698 / CCUG 18766 / IAM 14443 / JCM 21226 / LMG 7866 / NBRC 102419 / NCTC 12128 / CDC 0568-73).